The chain runs to 242 residues: Protein odd-skipped-related 1 (242 aa).

3 C2H2-type zinc fingers span residues 128 to 150, 156 to 178, and 184 to 207; these read FICK…ERTH, FHCE…KYIH, and HKCE…SCHH.

This sequence belongs to the Odd C2H2-type zinc-finger protein family.

The protein localises to the nucleus. In terms of biological role, may function as transcription regulator. Essential for larval development. Required for morphogenesis and function of the digestive tract. This is Protein odd-skipped-related 1 from Caenorhabditis elegans.